The chain runs to 237 residues: Ribonuclease PH (237 aa).

Residues R86 and 124–126 (GTR) contribute to the phosphate site.

This sequence belongs to the RNase PH family. As to quaternary structure, homohexameric ring arranged as a trimer of dimers.

It carries out the reaction tRNA(n+1) + phosphate = tRNA(n) + a ribonucleoside 5'-diphosphate. Its function is as follows. Phosphorolytic 3'-5' exoribonuclease that plays an important role in tRNA 3'-end maturation. Removes nucleotide residues following the 3'-CCA terminus of tRNAs; can also add nucleotides to the ends of RNA molecules by using nucleoside diphosphates as substrates, but this may not be physiologically important. Probably plays a role in initiation of 16S rRNA degradation (leading to ribosome degradation) during starvation. The chain is Ribonuclease PH from Bradyrhizobium sp. (strain ORS 278).